A 397-amino-acid chain; its full sequence is Argininosuccinate synthase (397 aa).

An ATP-binding site is contributed by 7–15 (AFSGGLDTT). L-citrulline is bound at residue tyrosine 84. An ATP-binding site is contributed by glycine 114. L-aspartate contacts are provided by threonine 116, asparagine 120, and aspartate 121. Asparagine 120 contributes to the L-citrulline binding site. 5 residues coordinate L-citrulline: arginine 124, serine 170, serine 179, glutamate 254, and tyrosine 266.

This sequence belongs to the argininosuccinate synthase family. Type 1 subfamily. Homotetramer.

Its subcellular location is the cytoplasm. It catalyses the reaction L-citrulline + L-aspartate + ATP = 2-(N(omega)-L-arginino)succinate + AMP + diphosphate + H(+). The protein operates within amino-acid biosynthesis; L-arginine biosynthesis; L-arginine from L-ornithine and carbamoyl phosphate: step 2/3. The protein is Argininosuccinate synthase of Haloquadratum walsbyi (strain DSM 16790 / HBSQ001).